Consider the following 805-residue polypeptide: Endonuclease MutS2 (805 aa).

344–351 (GPNGGGKT) provides a ligand contact to ATP. The interval 705 to 724 (RSRSEKLQAASEARPSAPPG) is disordered. Residues 729 to 804 (LDVRGLRVEE…GDAVTVVSLR (76 aa)) enclose the Smr domain.

It belongs to the DNA mismatch repair MutS family. MutS2 subfamily. In terms of assembly, homodimer. Binds to stalled ribosomes, contacting rRNA.

Endonuclease that is involved in the suppression of homologous recombination and thus may have a key role in the control of bacterial genetic diversity. In terms of biological role, acts as a ribosome collision sensor, splitting the ribosome into its 2 subunits. Detects stalled/collided 70S ribosomes which it binds and splits by an ATP-hydrolysis driven conformational change. Acts upstream of the ribosome quality control system (RQC), a ribosome-associated complex that mediates the extraction of incompletely synthesized nascent chains from stalled ribosomes and their subsequent degradation. Probably generates substrates for RQC. The sequence is that of Endonuclease MutS2 from Anaeromyxobacter sp. (strain Fw109-5).